Consider the following 300-residue polypeptide: Protein ARMCX6 (300 aa).

Residues 1–6 (MGRARE) are Mitochondrial intermembrane-facing. 2 mitochondrion outer membrane (MOM)-targeting sequence regions span residues 1-6 (MGRARE) and 26-36 (KLTIGRDDSEK). The helical; Signal-anchor transmembrane segment at 7-27 (VGWMAAGLMIGAGACYCVYKL) threads the bilayer. Topologically, residues 28–300 (TIGRDDSEKL…REILLETPAP (273 aa)) are cytoplasmic. Disordered stretches follow at residues 35 to 54 (EKLE…LDEE) and 69 to 99 (WTED…RAHP).

This sequence belongs to the eutherian X-chromosome-specific Armcx family.

It is found in the mitochondrion. The protein resides in the mitochondrion outer membrane. Functionally, may regulate the dynamics and distribution of mitochondria in neural cells. This chain is Protein ARMCX6 (ARMCX6), found in Homo sapiens (Human).